The sequence spans 113 residues: Holo-[acyl-carrier-protein] synthase (113 aa).

2 residues coordinate Mg(2+): Asp-5 and Glu-50.

This sequence belongs to the P-Pant transferase superfamily. AcpS family. The cofactor is Mg(2+).

It is found in the cytoplasm. The enzyme catalyses apo-[ACP] + CoA = holo-[ACP] + adenosine 3',5'-bisphosphate + H(+). Functionally, transfers the 4'-phosphopantetheine moiety from coenzyme A to a Ser of acyl-carrier-protein. This Nautilia profundicola (strain ATCC BAA-1463 / DSM 18972 / AmH) protein is Holo-[acyl-carrier-protein] synthase.